The following is a 744-amino-acid chain: 5-methyltetrahydropteroyltriglutamate--homocysteine methyltransferase (744 aa).

5-methyltetrahydropteroyltri-L-glutamate contacts are provided by residues 17–20 (REVK) and Lys-110. L-homocysteine contacts are provided by residues 422-424 (IGS) and Glu-475. L-methionine is bound by residues 422-424 (IGS) and Glu-475. 5-methyltetrahydropteroyltri-L-glutamate is bound at residue Trp-552. Asp-590 serves as a coordination point for L-homocysteine. Position 590 (Asp-590) interacts with L-methionine. Glu-596 contributes to the 5-methyltetrahydropteroyltri-L-glutamate binding site. Residues His-632, Cys-634, and Glu-656 each coordinate Zn(2+). The active-site Proton donor is the His-685. Cys-717 lines the Zn(2+) pocket.

Belongs to the vitamin-B12 independent methionine synthase family. The cofactor is Zn(2+).

It carries out the reaction 5-methyltetrahydropteroyltri-L-glutamate + L-homocysteine = tetrahydropteroyltri-L-glutamate + L-methionine. It functions in the pathway amino-acid biosynthesis; L-methionine biosynthesis via de novo pathway; L-methionine from L-homocysteine (MetE route): step 1/1. In terms of biological role, catalyzes the transfer of a methyl group from 5-methyltetrahydrofolate to homocysteine resulting in methionine formation. The chain is 5-methyltetrahydropteroyltriglutamate--homocysteine methyltransferase from Trichodesmium erythraeum (strain IMS101).